We begin with the raw amino-acid sequence, 502 residues long: MIRVEDASIGTVWVTCLLAVGLYFIRSRLLSDQFAGFPSVNSRKPWEVLNVFAHRRFQQNGPEYLKAGFAKSPVFGVVTDLGPKLVVSGAFIEDFKDEKLLDHYRAMVEDFMAEVPGFESMFLGNLHNTVLRDVISVITRELDQFTLPLSDEVSTALGDTWSDSPDWTEVTLLPSMLGLIARVSSLIFVGEPLCRDPAWLETVVNFTIVRHQAILALHMCPAVLRPVLHWFLPPCQKLRREIKTARSLINSALEELRKNPPTDRFSSLAWVDAFASGKKYDATMVQLRLANASIHSSADLLAKVLINLCEQPGLIQDLRDEVISVLEENGWRASTLNQLKLLDSVLKESQRLHPITTGTFSRFTRQNIKLTNGTEIPTGTPVMVTNDVAGDAAIYPDPEVFDGYRYLRMREGADKARAPFTTTGQNHLGFGYGKYACPGRFFAATEIKIALCHMLLKYEWRLVKDSPHDMLTSGFASFRDPRARIEVRRRAPDPQEVVLTIK.

A helical transmembrane segment spans residues 5–25 (EDASIGTVWVTCLLAVGLYFI). N-linked (GlcNAc...) asparagine glycans are attached at residues Asn205, Asn291, and Asn372. Cys437 contributes to the heme binding site.

It belongs to the cytochrome P450 family. Requires heme as cofactor.

The protein resides in the membrane. It functions in the pathway secondary metabolite biosynthesis; terpenoid biosynthesis. Cytochrome P450 monooxygenase; part of the gene cluster that mediates the biosynthesis of pyripyropene A, a specific human acyl-coenzyme A:cholesterol acyltransferase 2 inhibitor. The first step of the pathway is the synthesis of nicotinyl-CoA from nicotinic acid by the nicotinic acid-CoA ligase pyr1. Nicotinyl-CoA is then a substrate of polyketide synthase pyr2 to produce 4-hydroxy-6-(3-pyridinyl)-2H-pyran-2-one (HPPO) which is further prenylated by the polyprenyl transferase pyr6 to yield farnesyl-HPPO. The next steps consist of an epoxidation of farnesyl-HPPO to epoxyfarnesyl-HPPO by FAD-dependent monooxygenase pyr5 and a cyclization of the terpenoid portion by the terpene cyclase pyr4 to yield deacetyl-pyripyropene E. The 2 cytochrome P450 monooxygenases pyr3 and pyr9, and the 2 acetyltransferases pyr7 and pyr8 are involved in the conversion of deacetyl-pyripyropene E into pyripyropene A through several cycles of oxidation and acetylation steps. Pyr7 acetylates deacetyl-pyripyropene E to pyripyropene E which is oxidized to 11-deacetyl-pyripyropene O by pyr3, which is in turn acetylated into pyripyropene O by pyr8. Pyripyropene O is then oxidized to deacetyl-pyripyropene A by pyr9. Deacetyl-pyripyropene A is finally acetylated to pyripyropene A by pyr8. This is Cytochrome P450 monooxygenase pyr9 from Aspergillus fumigatus (strain ATCC MYA-4609 / CBS 101355 / FGSC A1100 / Af293) (Neosartorya fumigata).